The following is a 365-amino-acid chain: Ribosomal RNA large subunit methyltransferase F (365 aa).

Residues 1-50 (MSKPAVKSVPSATAKTATRAANPRQKAKAPKQAKPEGKGRAKPSKDKPRA) form a disordered region. The span at 33-50 (AKPEGKGRAKPSKDKPRA) shows a compositional bias: basic and acidic residues.

The protein belongs to the methyltransferase superfamily. METTL16/RlmF family.

The protein resides in the cytoplasm. It catalyses the reaction adenosine(1618) in 23S rRNA + S-adenosyl-L-methionine = N(6)-methyladenosine(1618) in 23S rRNA + S-adenosyl-L-homocysteine + H(+). Its function is as follows. Specifically methylates the adenine in position 1618 of 23S rRNA. The chain is Ribosomal RNA large subunit methyltransferase F from Shewanella baltica (strain OS195).